The sequence spans 1155 residues: RhoGEF domain-containing protein gxcJ (1155 aa).

5 disordered regions span residues 114 to 216 (ENNS…NFLK), 259 to 333 (LNKK…IPSN), 429 to 460 (LVSQ…DSLE), 484 to 508 (LNNE…TTTT), and 604 to 639 (SNSN…NNYQ). Composition is skewed to low complexity over residues 115-153 (NNSI…TNNN), 161-211 (TITN…NNNN), and 260-303 (NKKS…NNNN). A coiled-coil region spans residues 192–257 (NNNNNNNNNN…KDIEKLNSAL (66 aa)). Polar residues predominate over residues 304 to 319 (YKPTITSSQTQPSLME). The span at 320–330 (NSKDIDKKEKI) shows a compositional bias: basic and acidic residues. A compositionally biased stretch (low complexity) spans 441–457 (FLASASSSSTTTITTTD). The span at 604–637 (SNSNSSNNNNSNSNNITNSNSSSFSKKNSNNNNN) shows a compositional bias: low complexity. Residues 700 to 874 (HRTNLIKEIL…EKIVGTINSQ (175 aa)) enclose the DH domain. The interval 1084–1155 (SHRLSIPSTS…LVKSLVNIKT (72 aa)) is disordered. Low complexity-rich tracts occupy residues 1093–1121 (SSPN…GSPN) and 1128–1137 (QQQQLQQQQQ).

GTPase-activating protein. The polypeptide is RhoGEF domain-containing protein gxcJ (gxcJ) (Dictyostelium discoideum (Social amoeba)).